A 461-amino-acid chain; its full sequence is Ribitol-5-phosphate transferase FKTN (461 aa).

Topologically, residues 1-7 are cytoplasmic; that stretch reads MSRINKN. A required and sufficient for interaction with POMGNT1 region spans residues 6 to 27; that stretch reads KNVVLALLTLTSSAFLLFQLYY. A helical; Signal-anchor for type II membrane protein transmembrane segment spans residues 8 to 28; the sequence is VVLALLTLTSSAFLLFQLYYY. Residues 29-461 lie on the Lumenal side of the membrane; it reads KHYLSARNGP…SEWDEVIQLY (433 aa). A glycan (N-linked (GlcNAc...) asparagine) is linked at asparagine 92.

Belongs to the LicD transferase family. In terms of assembly, forms a complex composed of FKTN/fukutin, FKRP and RXYLT1/TMEM5. Interacts (via transmembrane domain) with POMGNT1; the interaction is direct and is required for normal POMGNT1 location in Golgi membranes. In terms of tissue distribution, expressed in the retina, with highest levels found in the inner segments of photoreceptors and the outer plexiform layer (at protein level). Expressed at lower levels in the inner and outer nuclear layers, the inner plexiform layers, and the ganglion cell layers of the retina (at protein level). Expressed in the heart, brain, spleen, lung, liver, skeletal muscle, kidney and testis.

Its subcellular location is the golgi apparatus membrane. It localises to the cytoplasm. The protein localises to the nucleus. The protein resides in the endoplasmic reticulum. It carries out the reaction 3-O-[beta-D-GalNAc-(1-&gt;3)-beta-D-GlcNAc-(1-&gt;4)-(O-6-P-alpha-D-Man)]-Thr-[protein] + CDP-L-ribitol = 3-O-[Rib-ol-P-3-beta-D-GalNAc-(1-&gt;3)-beta-D-GlcNAc-(1-&gt;4)-(O-6-P-alpha-D-Man)]-Thr-[protein] + CMP + H(+). It functions in the pathway protein modification; protein glycosylation. Catalyzes the transfer of CDP-ribitol to the distal N-acetylgalactosamine of the phosphorylated O-mannosyl trisaccharide (N-acetylgalactosamine-beta-3-N-acetylglucosamine-beta-4-(phosphate-6-)mannose), a carbohydrate structure present in alpha-dystroglycan (DAG1). This constitutes the first step in the formation of the ribitol 5-phosphate tandem repeat which links the phosphorylated O-mannosyl trisaccharide to the ligand binding moiety composed of repeats of 3-xylosyl-alpha-1,3-glucuronic acid-beta-1. Required for normal location of POMGNT1 in Golgi membranes, and for normal POMGNT1 activity. May interact with and reinforce a large complex encompassing the outside and inside of muscle membranes. Could be involved in brain development. The protein is Ribitol-5-phosphate transferase FKTN of Mus musculus (Mouse).